The following is a 264-amino-acid chain: S-adenosylmethionine decarboxylase proenzyme (264 aa).

S113 acts as the Schiff-base intermediate with substrate; via pyruvic acid in catalysis. The residue at position 113 (S113) is a Pyruvic acid (Ser); by autocatalysis. H118 acts as the Proton acceptor; for processing activity in catalysis. Catalysis depends on C141, which acts as the Proton donor; for catalytic activity.

It belongs to the prokaryotic AdoMetDC family. Type 2 subfamily. In terms of assembly, heterooctamer of four alpha and four beta chains arranged as a tetramer of alpha/beta heterodimers. Pyruvate serves as cofactor. Is synthesized initially as an inactive proenzyme. Formation of the active enzyme involves a self-maturation process in which the active site pyruvoyl group is generated from an internal serine residue via an autocatalytic post-translational modification. Two non-identical subunits are generated from the proenzyme in this reaction, and the pyruvate is formed at the N-terminus of the alpha chain, which is derived from the carboxyl end of the proenzyme. The post-translation cleavage follows an unusual pathway, termed non-hydrolytic serinolysis, in which the side chain hydroxyl group of the serine supplies its oxygen atom to form the C-terminus of the beta chain, while the remainder of the serine residue undergoes an oxidative deamination to produce ammonia and the pyruvoyl group blocking the N-terminus of the alpha chain.

It carries out the reaction S-adenosyl-L-methionine + H(+) = S-adenosyl 3-(methylsulfanyl)propylamine + CO2. Its pathway is amine and polyamine biosynthesis; S-adenosylmethioninamine biosynthesis; S-adenosylmethioninamine from S-adenosyl-L-methionine: step 1/1. In terms of biological role, catalyzes the decarboxylation of S-adenosylmethionine to S-adenosylmethioninamine (dcAdoMet), the propylamine donor required for the synthesis of the polyamines spermine and spermidine from the diamine putrescine. This Pseudomonas aeruginosa (strain UCBPP-PA14) protein is S-adenosylmethionine decarboxylase proenzyme.